Reading from the N-terminus, the 144-residue chain is Protein NrdI (144 aa).

The protein belongs to the NrdI family.

In terms of biological role, probably involved in ribonucleotide reductase function. In Streptococcus pyogenes serotype M4 (strain MGAS10750), this protein is Protein NrdI.